We begin with the raw amino-acid sequence, 233 residues long: Large ribosomal subunit protein uL1 (233 aa).

This sequence belongs to the universal ribosomal protein uL1 family. Part of the 50S ribosomal subunit.

In terms of biological role, binds directly to 23S rRNA. The L1 stalk is quite mobile in the ribosome, and is involved in E site tRNA release. Its function is as follows. Protein L1 is also a translational repressor protein, it controls the translation of the L11 operon by binding to its mRNA. This Geobacillus kaustophilus (strain HTA426) protein is Large ribosomal subunit protein uL1.